Reading from the N-terminus, the 333-residue chain is Probable tRNA pseudouridine synthase B (333 aa).

A compositionally biased stretch (basic and acidic residues) spans 1-14; that stretch reads MKCPSREVFSKFEE. Positions 1–27 are disordered; sequence MKCPSREVFSKFEESTNPQWGKPPSQR. Residue D71 is the Nucleophile of the active site. The 76-residue stretch at 238–313 folds into the PUA domain; the sequence is LPKIWVRDSA…LVARTDRVVM (76 aa).

The protein belongs to the pseudouridine synthase TruB family. Type 2 subfamily.

It catalyses the reaction uridine(55) in tRNA = pseudouridine(55) in tRNA. In terms of biological role, could be responsible for synthesis of pseudouridine from uracil-55 in the psi GC loop of transfer RNAs. The protein is Probable tRNA pseudouridine synthase B of Pyrobaculum aerophilum (strain ATCC 51768 / DSM 7523 / JCM 9630 / CIP 104966 / NBRC 100827 / IM2).